The sequence spans 239 residues: 1-(5-phosphoribosyl)-5-[(5-phosphoribosylamino)methylideneamino] imidazole-4-carboxamide isomerase (239 aa).

The active-site Proton acceptor is the aspartate 8. The active-site Proton donor is the aspartate 130.

Belongs to the HisA/HisF family.

It localises to the cytoplasm. The catalysed reaction is 1-(5-phospho-beta-D-ribosyl)-5-[(5-phospho-beta-D-ribosylamino)methylideneamino]imidazole-4-carboxamide = 5-[(5-phospho-1-deoxy-D-ribulos-1-ylimino)methylamino]-1-(5-phospho-beta-D-ribosyl)imidazole-4-carboxamide. The protein operates within amino-acid biosynthesis; L-histidine biosynthesis; L-histidine from 5-phospho-alpha-D-ribose 1-diphosphate: step 4/9. This is 1-(5-phosphoribosyl)-5-[(5-phosphoribosylamino)methylideneamino] imidazole-4-carboxamide isomerase from Streptococcus thermophilus (strain ATCC BAA-491 / LMD-9).